The primary structure comprises 433 residues: Pyrimidine-nucleoside phosphorylase (433 aa).

81-83 (KHS) contributes to the phosphate binding site. Positions 88 and 90 each coordinate K(+). Phosphate contacts are provided by residues Thr-92, 108-110 (KMS), and Thr-120. Substrate contacts are provided by Arg-168 and Lys-187. K(+) contacts are provided by Leu-243, Ala-246, and Glu-255.

This sequence belongs to the thymidine/pyrimidine-nucleoside phosphorylase family. In terms of assembly, homodimer. K(+) serves as cofactor.

It catalyses the reaction uridine + phosphate = alpha-D-ribose 1-phosphate + uracil. The catalysed reaction is thymidine + phosphate = 2-deoxy-alpha-D-ribose 1-phosphate + thymine. The enzyme catalyses 2'-deoxyuridine + phosphate = 2-deoxy-alpha-D-ribose 1-phosphate + uracil. Its function is as follows. Catalyzes phosphorolysis of the pyrimidine nucleosides uridine, thymidine and 2'-deoxyuridine with the formation of the corresponding pyrimidine base and ribose-1-phosphate. The sequence is that of Pyrimidine-nucleoside phosphorylase (pdp) from Staphylococcus epidermidis (strain ATCC 12228 / FDA PCI 1200).